We begin with the raw amino-acid sequence, 344 residues long: Tetraacyldisaccharide 4'-kinase (344 aa).

65–72 (HAGGTGKT) lines the ATP pocket.

It belongs to the LpxK family.

It catalyses the reaction a lipid A disaccharide + ATP = a lipid IVA + ADP + H(+). It participates in glycolipid biosynthesis; lipid IV(A) biosynthesis; lipid IV(A) from (3R)-3-hydroxytetradecanoyl-[acyl-carrier-protein] and UDP-N-acetyl-alpha-D-glucosamine: step 6/6. Functionally, transfers the gamma-phosphate of ATP to the 4'-position of a tetraacyldisaccharide 1-phosphate intermediate (termed DS-1-P) to form tetraacyldisaccharide 1,4'-bis-phosphate (lipid IVA). The sequence is that of Tetraacyldisaccharide 4'-kinase from Neisseria meningitidis serogroup B (strain ATCC BAA-335 / MC58).